A 469-amino-acid chain; its full sequence is UDP-N-acetylmuramoylalanine--D-glutamate ligase (469 aa).

121–127 (GTNGKST) lines the ATP pocket.

The protein belongs to the MurCDEF family.

It is found in the cytoplasm. It catalyses the reaction UDP-N-acetyl-alpha-D-muramoyl-L-alanine + D-glutamate + ATP = UDP-N-acetyl-alpha-D-muramoyl-L-alanyl-D-glutamate + ADP + phosphate + H(+). Its pathway is cell wall biogenesis; peptidoglycan biosynthesis. Cell wall formation. Catalyzes the addition of glutamate to the nucleotide precursor UDP-N-acetylmuramoyl-L-alanine (UMA). This chain is UDP-N-acetylmuramoylalanine--D-glutamate ligase, found in Rhodopseudomonas palustris (strain ATCC BAA-98 / CGA009).